The following is a 378-amino-acid chain: Alcohol dehydrogenase (378 aa).

Fe cation-binding residues include D195, H199, H262, and H274.

The protein belongs to the iron-containing alcohol dehydrogenase family. The cofactor is Fe(2+). Requires Mn(2+) as cofactor.

It catalyses the reaction a primary alcohol + NAD(+) = an aldehyde + NADH + H(+). It carries out the reaction butan-1-ol + NAD(+) = butanal + NADH + H(+). The catalysed reaction is hexan-1-ol + NAD(+) = hexanal + NADH + H(+). The enzyme catalyses ethanol + NAD(+) = acetaldehyde + NADH + H(+). Thermostable type III alcohol dehydrogenase. For oxidation activity, the best substrates are 1-butanol and 1-hexanol, followed by ethanol. Shows lower activity with ethylene glycol, isopentanol, isopropanol and glycerol. Displays higher reduction activity in the presence of butanal, followed by acetaldehyde. Has lower activity with hexanal and acetone. The protein is Alcohol dehydrogenase of Thermococcus barophilus.